The following is a 202-amino-acid chain: Nascent polypeptide-associated complex subunit alpha (202 aa).

A compositionally biased stretch (basic and acidic residues) spans methionine 1–valine 19. Residues methionine 1–valine 41 form a disordered region. The NAC-A/B domain occupies serine 45–alanine 110. The segment covering glutamine 117 to glutamate 127 has biased composition (low complexity). The interval glutamine 117 to alanine 165 is disordered. Basic and acidic residues predominate over residues histidine 128–glutamate 149. Acidic residues predominate over residues glutamate 150–glycine 162. The UBA domain maps to leucine 163–isoleucine 202.

It belongs to the NAC-alpha family. Part of the nascent polypeptide-associated complex (NAC), consisting of egd2 and egd1. NAC associates with ribosomes via egd1.

It localises to the cytoplasm. The protein localises to the nucleus. Component of the nascent polypeptide-associated complex (NAC), a dynamic component of the ribosomal exit tunnel, protecting the emerging polypeptides from interaction with other cytoplasmic proteins to ensure appropriate nascent protein targeting. The NAC complex also promotes mitochondrial protein import by enhancing productive ribosome interactions with the outer mitochondrial membrane and blocks the inappropriate interaction of ribosomes translating non-secretory nascent polypeptides with translocation sites in the membrane of the endoplasmic reticulum. Egd2 may also be involved in transcription regulation. In Aspergillus oryzae (strain ATCC 42149 / RIB 40) (Yellow koji mold), this protein is Nascent polypeptide-associated complex subunit alpha (egd2).